A 496-amino-acid polypeptide reads, in one-letter code: Acetyl-coenzyme A carboxylase carboxyl transferase subunit beta, chloroplastic (496 aa).

The CoA carboxyltransferase N-terminal domain maps to 229–496 (LWVQCENCYG…FFPLNKNFIK (268 aa)). Zn(2+) is bound by residues Cys233, Cys236, Cys252, and Cys255. The segment at 233-255 (CENCYGLNYKKFFRLKLHICEQC) adopts a C4-type zinc-finger fold.

It belongs to the AccD/PCCB family. Acetyl-CoA carboxylase is a heterohexamer composed of biotin carboxyl carrier protein, biotin carboxylase and 2 subunits each of ACCase subunit alpha and ACCase plastid-coded subunit beta (accD). Zn(2+) serves as cofactor.

It localises to the plastid. It is found in the chloroplast stroma. The enzyme catalyses N(6)-carboxybiotinyl-L-lysyl-[protein] + acetyl-CoA = N(6)-biotinyl-L-lysyl-[protein] + malonyl-CoA. The protein operates within lipid metabolism; malonyl-CoA biosynthesis; malonyl-CoA from acetyl-CoA: step 1/1. Component of the acetyl coenzyme A carboxylase (ACC) complex. Biotin carboxylase (BC) catalyzes the carboxylation of biotin on its carrier protein (BCCP) and then the CO(2) group is transferred by the transcarboxylase to acetyl-CoA to form malonyl-CoA. The protein is Acetyl-coenzyme A carboxylase carboxyl transferase subunit beta, chloroplastic of Ranunculus macranthus (Large buttercup).